Reading from the N-terminus, the 487-residue chain is GTPase Der (487 aa).

EngA-type G domains lie at 3–166 (PVVA…AEAM) and 199–372 (IKLA…DSAT). Residues 9 to 16 (GRPNVGKS), 56 to 60 (DTGGI), 118 to 121 (NKID), 205 to 212 (GKPNVGKS), 252 to 256 (DTAGV), and 317 to 320 (NKWD) each bind GTP. The KH-like domain maps to 373 to 457 (RRVSTSMLTR…PIQLRFQEGD (85 aa)).

Belongs to the TRAFAC class TrmE-Era-EngA-EngB-Septin-like GTPase superfamily. EngA (Der) GTPase family. Associates with the 50S ribosomal subunit.

In terms of biological role, GTPase that plays an essential role in the late steps of ribosome biogenesis. The chain is GTPase Der from Shewanella oneidensis (strain ATCC 700550 / JCM 31522 / CIP 106686 / LMG 19005 / NCIMB 14063 / MR-1).